The following is a 90-amino-acid chain: Acylphosphatase (90 aa).

In terms of domain architecture, Acylphosphatase-like spans 3-90 (QKLFIVTGHV…EQFEHFEIRR (88 aa)). Residues Arg-18 and Asn-36 contribute to the active site.

This sequence belongs to the acylphosphatase family.

The catalysed reaction is an acyl phosphate + H2O = a carboxylate + phosphate + H(+). In Actinobacillus pleuropneumoniae serotype 5b (strain L20), this protein is Acylphosphatase (acyP).